Reading from the N-terminus, the 75-residue chain is Cruzioseptin-7 (75 aa).

Residues 1–22 (MAKLKKSLFLVLFLGLVSLSIC) form the signal peptide. A propeptide spanning residues 23 to 43 (EEEKREEENEEVQEDDDQSEE) is cleaved from the precursor. The interval 25 to 44 (EKREEENEEVQEDDDQSEEK) is disordered. Positions 30–41 (ENEEVQEDDDQS) are enriched in acidic residues.

Expressed by the skin glands.

The protein resides in the secreted. Functionally, has antimicrobial activity. This Cruziohyla calcarifer (Splendid leaf frog) protein is Cruzioseptin-7.